We begin with the raw amino-acid sequence, 502 residues long: MEKQSFSDGLFSPLGIKRVIFMLVLLTTSFISCSNSDEKGGSLEVAQEYRNLEFDARGSRQTIQIDGPAEWHISTSESWCKSSHTIGEGKQYVNITVEANDTQKERTATVTVSASGAPDIIINVKQSLYSVPAYDEYIAPDNTGMRDLTSMQLSALMKAGVNVGNTFEAVIVGNDGSLSGDETCWGNPTPNKVLFEGIKAAGFDVVRIPVAYSHQFEDAATYKIKSAWMDKVEAAVKAALDAGLYVIINIHWEGGWLNHPVDANKEALDERLEAMWKQIALRFRDYDDRLLFAGTNEVNNDDANGAQPTEENYRVQNGFNQVFVNTVRATGGRNHYRHLIVQAYNTDVAKAVAHFTMPLDIVQNRIFLECHYYDPYDFTIMPNDENFKSQWGAAFAGGDVSATGQEGDIEATLSSLNVFINNNVPVIIGEYGPTLRDQLTGEALENHLKSRNDYIEYVVKTCVKNKLVPLYWDAGYTEKLFDRTTGQPHNAASIAAIMKGLN.

The first 32 residues, 1–32 (MEKQSFSDGLFSPLGIKRVIFMLVLLTTSFIS), serve as a signal peptide directing secretion. A lipid anchor (N-palmitoyl cysteine) is attached at cysteine 33. The S-diacylglycerol cysteine moiety is linked to residue cysteine 33. The BACON domain maps to 67-127 (GPAEWHISTS…PDIIINVKQS (61 aa)). Residues asparagine 165, valine 172, histidine 251, and asparagine 296 each contribute to the substrate site. Glutamate 297 serves as the catalytic Proton donor. Glutamate 430 acts as the Nucleophile in catalysis. Position 472 (tryptophan 472) interacts with substrate.

It belongs to the glycosyl hydrolase 5 (cellulase A) family.

Its subcellular location is the cell outer membrane. It catalyses the reaction xyloglucan + H2O = xyloglucan oligosaccharides.. The protein operates within glucan metabolism; xyloglucan degradation. Catalyzes endohydrolysis of 1,4-beta-D-glucosidic linkages in xyloglucan with retention of the beta-configuration of the glycosyl residues in xyloglucan degradation. Cleaves the backbone of the 3 major types of natural xyloglucans (seed galactoxyloglucan from tamarind kernel, dicot fucogalactoxyloglucan from lettuce leaves, and solanaceous arabinogalactoxyloglucan from tomato fruit), to produce xyloglucan oligosaccharides. This Bacteroides ovatus (strain ATCC 8483 / DSM 1896 / JCM 5824 / BCRC 10623 / CCUG 4943 / NCTC 11153) protein is Xyloglucan-specific endo-beta-1,4-glucanase BoGH5A.